Consider the following 653-residue polypeptide: MYLVIIFLPLLGSIISGFFGRKIGVQGAQLITSSFIIITTMLAIFNFFEVGYNNIPLEINLFRWIDSESINILWGFYFDSLTVSMLIPVLIVSSLVHIYSIGYMSHDPHNQRFFSYLSLFTFMMIILVTANNYLLMFLGVEGVGVCSYLLVNFWFTRIAANQSSISAFLTNRVGDCFLTIGMFIIIWSFGNLDYSTVFSLAPYFNQEFITLIGICLLIGAMAKSSQIGLHVWLPQAMEGPTPVSALIHAATMVTAGVYLLMRSSPLIEYSSTVLILCLWLGAITTIFSSIIGLFQQDIKKVIAYSTMSQLGMMVIAIGLSSYNLALFHLVNHAFYKALLFLGAGAVIHSVSDNQDFRKYGGLKPFLPLAYSIMLIASLSLVAIPFMSGFYSKDFILESAYGQFYISSTLVYFIATIGAMFTTLYSVKVLYLTFLTNPNGPLNNYKNVDQGNIFINLPLIILAIFSIFFGYLTKDVFIGLGTSFFIDNRYFIHPSHEIMLDTEFALPTLFKLLPLFFTITLSIIGIMFSEFFGNLLIKFKFTNLGYNIFSLFNQRFLIEFFYNNYITNFVLKLGGQTTKVLYKGSVELLGPYGLEKRLLNLSKNIGSLSTGVITSYALYILIGLIFYVFLLYLNIDNNILLLLLFGIFSTINKK.

16 helical membrane passes run Met-1–Arg-21, Leu-30–Val-50, Leu-81–Tyr-103, Phe-120–Val-140, Phe-177–Val-197, Leu-200–Ala-220, Thr-241–Met-261, Leu-274–Phe-294, Val-301–Leu-319, Asn-331–Ser-351, Phe-365–Phe-385, Phe-403–Leu-423, Ile-452–Thr-472, Leu-511–Phe-531, Gly-610–Leu-630, and Tyr-631–Asn-651.

Belongs to the complex I subunit 5 family.

The protein resides in the mitochondrion inner membrane. It catalyses the reaction a ubiquinone + NADH + 5 H(+)(in) = a ubiquinol + NAD(+) + 4 H(+)(out). Its function is as follows. Core subunit of the mitochondrial membrane respiratory chain NADH dehydrogenase (Complex I) that is believed to belong to the minimal assembly required for catalysis. Complex I functions in the transfer of electrons from NADH to the respiratory chain. The immediate electron acceptor for the enzyme is believed to be ubiquinone. This Trichophyton rubrum (Athlete's foot fungus) protein is NADH-ubiquinone oxidoreductase chain 5 (ND5).